We begin with the raw amino-acid sequence, 63 residues long: Large ribosomal subunit protein bL28c (63 aa).

This sequence belongs to the bacterial ribosomal protein bL28 family.

Its subcellular location is the plastid. It is found in the chloroplast. The chain is Large ribosomal subunit protein bL28c from Pyropia yezoensis (Susabi-nori).